Here is a 498-residue protein sequence, read N- to C-terminus: ATP synthase subunit beta, chloroplastic (498 aa).

Residue 172–179 coordinates ATP; sequence GGAGVGKT.

Belongs to the ATPase alpha/beta chains family. In terms of assembly, F-type ATPases have 2 components, CF(1) - the catalytic core - and CF(0) - the membrane proton channel. CF(1) has five subunits: alpha(3), beta(3), gamma(1), delta(1), epsilon(1). CF(0) has four main subunits: a(1), b(1), b'(1) and c(9-12).

It localises to the plastid. Its subcellular location is the chloroplast thylakoid membrane. It carries out the reaction ATP + H2O + 4 H(+)(in) = ADP + phosphate + 5 H(+)(out). Its function is as follows. Produces ATP from ADP in the presence of a proton gradient across the membrane. The catalytic sites are hosted primarily by the beta subunits. The sequence is that of ATP synthase subunit beta, chloroplastic from Phalaenopsis aphrodite subsp. formosana (Moth orchid).